Reading from the N-terminus, the 378-residue chain is Uroporphyrinogen decarboxylase (378 aa).

Substrate-binding positions include 40 to 44, D90, Y167, S222, and H355; that span reads RQAGR.

Belongs to the uroporphyrinogen decarboxylase family. In terms of assembly, homodimer.

The protein localises to the cytoplasm. The enzyme catalyses uroporphyrinogen III + 4 H(+) = coproporphyrinogen III + 4 CO2. Its pathway is porphyrin-containing compound metabolism; protoporphyrin-IX biosynthesis; coproporphyrinogen-III from 5-aminolevulinate: step 4/4. Its function is as follows. Catalyzes the decarboxylation of four acetate groups of uroporphyrinogen-III to yield coproporphyrinogen-III. This is Uroporphyrinogen decarboxylase from Psychrobacter cryohalolentis (strain ATCC BAA-1226 / DSM 17306 / VKM B-2378 / K5).